The chain runs to 117 residues: Aspartate 1-decarboxylase (117 aa).

Ser-25 serves as the catalytic Schiff-base intermediate with substrate; via pyruvic acid. At Ser-25 the chain carries Pyruvic acid (Ser). Thr-57 lines the substrate pocket. The active-site Proton donor is the Tyr-58. Substrate is bound at residue 72 to 74 (GAA).

Belongs to the PanD family. In terms of assembly, heterooctamer of four alpha and four beta subunits. The cofactor is pyruvate. Post-translationally, is synthesized initially as an inactive proenzyme, which is activated by self-cleavage at a specific serine bond to produce a beta-subunit with a hydroxyl group at its C-terminus and an alpha-subunit with a pyruvoyl group at its N-terminus.

It localises to the cytoplasm. The enzyme catalyses L-aspartate + H(+) = beta-alanine + CO2. Its pathway is cofactor biosynthesis; (R)-pantothenate biosynthesis; beta-alanine from L-aspartate: step 1/1. Functionally, catalyzes the pyruvoyl-dependent decarboxylation of aspartate to produce beta-alanine. This is Aspartate 1-decarboxylase from Helicobacter pylori (strain ATCC 700392 / 26695) (Campylobacter pylori).